Here is an 86-residue protein sequence, read N- to C-terminus: Large ribosomal subunit protein bL27 (86 aa).

The segment at 1–22 is disordered; it reads MAHKKAGGSSRNGRDSESKRLG.

The protein belongs to the bacterial ribosomal protein bL27 family.

The chain is Large ribosomal subunit protein bL27 from Acidithiobacillus ferrooxidans (strain ATCC 23270 / DSM 14882 / CIP 104768 / NCIMB 8455) (Ferrobacillus ferrooxidans (strain ATCC 23270)).